We begin with the raw amino-acid sequence, 493 residues long: Putative MgpC-like protein MPN_414 (493 aa).

Residues 1–14 (MKPTSLPKNFTNNP) are compositionally biased toward polar residues. Disordered regions lie at residues 1–92 (MKPT…GHNS) and 441–493 (KSAR…SGNH). 2 stretches are compositionally biased toward basic and acidic residues: residues 25–34 (DNGRAYRKLN) and 44–56 (DSTK…DKDG). 2 stretches are compositionally biased toward polar residues: residues 72–92 (VSST…GHNS) and 445–472 (ENAQ…SPCR). Over residues 482-493 (RVTEEERSSGNH) the composition is skewed to basic and acidic residues.

This sequence belongs to the MgpC family.

The polypeptide is Putative MgpC-like protein MPN_414 (Mycoplasma pneumoniae (strain ATCC 29342 / M129 / Subtype 1) (Mycoplasmoides pneumoniae)).